The following is a 495-amino-acid chain: UPF0371 protein cgR_2887 (495 aa).

The protein belongs to the UPF0371 family.

The polypeptide is UPF0371 protein cgR_2887 (Corynebacterium glutamicum (strain R)).